A 461-amino-acid polypeptide reads, in one-letter code: Cysteine--tRNA ligase (461 aa).

Zn(2+) is bound at residue Cys-29. Positions 31 to 41 (PTVYNYAHIGN) match the 'HIGH' region motif. The Zn(2+) site is built by Cys-214, His-239, and Glu-243. The 'KMSKS' region motif lies at 271 to 275 (KMSKS). Residue Lys-274 coordinates ATP.

The protein belongs to the class-I aminoacyl-tRNA synthetase family. As to quaternary structure, monomer. It depends on Zn(2+) as a cofactor.

The protein localises to the cytoplasm. It carries out the reaction tRNA(Cys) + L-cysteine + ATP = L-cysteinyl-tRNA(Cys) + AMP + diphosphate. In Hyphomonas neptunium (strain ATCC 15444), this protein is Cysteine--tRNA ligase.